The primary structure comprises 553 residues: Putative transport protein KPN78578_40470 (553 aa).

5 helical membrane-spanning segments follow: residues isoleucine 4–valine 24, glycine 28–aspartate 48, phenylalanine 65–serine 85, leucine 95–phenylalanine 115, and methionine 158–valine 178. RCK C-terminal domains lie at arginine 192–glutamine 276 and alanine 279–asparagine 361. The next 6 helical transmembrane spans lie at methionine 371–isoleucine 391, alanine 403–phenylalanine 425, leucine 437–threonine 457, leucine 464–leucine 484, tyrosine 493–alanine 513, and proline 532–leucine 552.

This sequence belongs to the AAE transporter (TC 2.A.81) family. YidE subfamily.

The protein resides in the cell membrane. The protein is Putative transport protein KPN78578_40470 of Klebsiella pneumoniae subsp. pneumoniae (strain ATCC 700721 / MGH 78578).